Reading from the N-terminus, the 442-residue chain is DNA N(6)-methyladenine demethylase ALKBH1D (442 aa).

The span at Ser135 to Pro144 shows a compositional bias: polar residues. The segment at Ser135 to Phe185 is disordered. The segment covering Ser145–Gln154 has biased composition (low complexity). A compositionally biased stretch (basic residues) spans Lys157–Ser167. A compositionally biased stretch (basic and acidic residues) spans Lys170–Pro183. Residues Ser332–Phe442 form the Fe2OG dioxygenase domain. A 2-oxoglutarate-binding site is contributed by Asn339 to Tyr341. Residues His350, Asp352, and His410 each coordinate Fe cation. Arg434–Arg440 provides a ligand contact to 2-oxoglutarate.

Belongs to the alkB family. The cofactor is Fe(2+). As to expression, expressed at low levels in roots, seedlings and rosette leaves, but barely in cauline leaves, stems, siliques and flowers.

The protein localises to the nucleus. The protein resides in the cytoplasm. It carries out the reaction an N(6)-methyl-2'-deoxyadenosine in DNA + 2-oxoglutarate + O2 = a 2'-deoxyadenosine in DNA + formaldehyde + succinate + CO2. Functionally, dioxygenase that catalyzes DNA N(6)-methyladenine (6 mA) demethylation to modulate gene expression and regulate seed germination. This is DNA N(6)-methyladenine demethylase ALKBH1D from Arabidopsis thaliana (Mouse-ear cress).